A 190-amino-acid polypeptide reads, in one-letter code: Class III hydrophobin F (190 aa).

Residues 1–18 (MRPITILCTLATLSTTLA) form the signal peptide. 4 disulfides stabilise this stretch: Cys-54–Cys-115, Cys-62–Cys-109, Cys-63–Cys-97, and Cys-116–Cys-131.

It belongs to the fungal hydrophobin family. As to quaternary structure, self-assembles to form functional amyloid fibrils called rodlets. Self-assembly into fibrillar rodlets occurs spontaneously at hydrophobic:hydrophilic interfaces and the rodlets further associate laterally to form amphipathic monolayers.

Its subcellular location is the secreted. The protein localises to the cell wall. Functionally, aerial growth, conidiation, and dispersal of filamentous fungi in the environment rely upon a capability of their secreting small amphipathic proteins called hydrophobins (HPBs) with low sequence identity. Class I can self-assemble into an outermost layer of rodlet bundles on aerial cell surfaces, conferring cellular hydrophobicity that supports fungal growth, development and dispersal; whereas Class II form highly ordered films at water-air interfaces through intermolecular interactions but contribute nothing to the rodlet structure. RodF and rodG belong to Class III, which contains hydrophobins with intermediate (between classes I and II) or atypical characteristics. RodF, unlike rodA, is not required for rodlet formation. This is Class III hydrophobin F from Aspergillus fumigatus (strain ATCC MYA-4609 / CBS 101355 / FGSC A1100 / Af293) (Neosartorya fumigata).